The primary structure comprises 206 residues: Flavin prenyltransferase UbiX (206 aa).

Residues 14–16 (GAS), threonine 40, 101–104 (SMGT), and arginine 136 each bind FMN. Dimethylallyl phosphate-binding residues include tyrosine 166 and lysine 182.

This sequence belongs to the UbiX/PAD1 family.

The catalysed reaction is dimethylallyl phosphate + FMNH2 = prenylated FMNH2 + phosphate. In terms of biological role, flavin prenyltransferase that catalyzes the synthesis of the prenylated FMN cofactor (prenyl-FMN) for 4-hydroxy-3-polyprenylbenzoic acid decarboxylase UbiD. The prenyltransferase is metal-independent and links a dimethylallyl moiety from dimethylallyl monophosphate (DMAP) to the flavin N5 and C6 atoms of FMN. This Halalkalibacterium halodurans (strain ATCC BAA-125 / DSM 18197 / FERM 7344 / JCM 9153 / C-125) (Bacillus halodurans) protein is Flavin prenyltransferase UbiX.